The chain runs to 256 residues: MQTETIHNIPYVNSNLTSFIDYLEKHYIDQKIGAVISTVNPEIAFAAIKDRDYFDVLSSSNFILPDGIGVVMMSRLTNNRLQSRIAGYDVFKELLGVANKKKKRIFLYGAKKDVIKGVVSKISSEYPNIKIAGYSDGYVQDRTLVAKQIARANPDMVFVALGYPHQEKFIHNYRHLFPKAVSIGLGGSFDVFSGNVKRAPSWMIRLNLEWFYRLILNPWRWKRMLSIPKYALTVLKEEKNKKTFYPKPEKDHTKQI.

Belongs to the glycosyltransferase 26 family. TagA/TarA subfamily.

It catalyses the reaction UDP-N-acetyl-alpha-D-mannosamine + N-acetyl-alpha-D-glucosaminyl-di-trans,octa-cis-undecaprenyl diphosphate = N-acetyl-beta-D-mannosaminyl-(1-&gt;4)-N-acetyl-alpha-D-glucosaminyl di-trans,octa-cis-undecaprenyl diphosphate + UDP + H(+). It functions in the pathway cell wall biogenesis; poly(glycerol phosphate) teichoic acid biosynthesis. Functionally, catalyzes the conversion of GlcNAc-PP-undecaprenol into ManNAc-GlcNAc-PP-undecaprenol, the first committed lipid intermediate in the de novo synthesis of teichoic acid. The chain is N-acetylglucosaminyldiphosphoundecaprenol N-acetyl-beta-D-mannosaminyltransferase from Bacillus subtilis (strain 168).